We begin with the raw amino-acid sequence, 81 residues long: Conotoxin Lt6.4 (81 aa).

A signal peptide spans 1-19; the sequence is MKLVLAIVLILMFLSLSAG. A propeptide spanning residues 20–42 is cleaved from the precursor; it reads AETSDNGVSRGGHRPQYWPVTPP. Disulfide bonds link Cys-46–Cys-60, Cys-53–Cys-65, and Cys-59–Cys-80.

This sequence belongs to the conotoxin I3 superfamily. Expressed by the venom duct.

Its subcellular location is the secreted. The polypeptide is Conotoxin Lt6.4 (Conus litteratus (Lettered cone)).